The following is a 246-amino-acid chain: Orotidine 5'-phosphate decarboxylase (246 aa).

Residues Asp22, Lys44, 71-80 (DLKFHDIPNT), Thr131, Arg192, Gln201, Gly221, and Arg222 each bind substrate. The Proton donor role is filled by Lys73.

The protein belongs to the OMP decarboxylase family. Type 1 subfamily. Homodimer.

It carries out the reaction orotidine 5'-phosphate + H(+) = UMP + CO2. It functions in the pathway pyrimidine metabolism; UMP biosynthesis via de novo pathway; UMP from orotate: step 2/2. In terms of biological role, catalyzes the decarboxylation of orotidine 5'-monophosphate (OMP) to uridine 5'-monophosphate (UMP). In Yersinia enterocolitica serotype O:8 / biotype 1B (strain NCTC 13174 / 8081), this protein is Orotidine 5'-phosphate decarboxylase.